A 266-amino-acid chain; its full sequence is HLA class II histocompatibility antigen, DR beta 5 chain (266 aa).

An N-terminal signal peptide occupies residues 1 to 29 (MVCLKLPGGSYMAKLTVTLMVLSSPLALA). The interval 30–124 (GDTRPRFLQQ…GESFTVQRRV (95 aa)) is beta-1. The Extracellular segment spans residues 30–227 (GDTRPRFLQQ…RAQSESAQSK (198 aa)). Intrachain disulfides connect cysteine 44–cysteine 108 and cysteine 146–cysteine 202. The N-linked (GlcNAc...) asparagine glycan is linked to asparagine 48. The tract at residues 125–227 (EPKVTVYPAR…RAQSESAQSK (103 aa)) is beta-2. Positions 126–214 (PKVTVYPART…EHPSVTSPLT (89 aa)) constitute an Ig-like C1-type domain. A helical membrane pass occupies residues 228–248 (MLSGVGGFVLGLLFLGAGLFI). Residues 249–266 (YFKNQKGHSGLHPTGLVS) lie on the Cytoplasmic side of the membrane.

It belongs to the MHC class II family. Heterodimer of an alpha and a beta subunit; also referred as MHC class II molecule. In the endoplasmic reticulum (ER) it forms a heterononamer; 3 MHC class II molecules bind to a CD74 homotrimer (also known as invariant chain or HLA class II histocompatibility antigen gamma chain). In the endosomal/lysosomal system; CD74 undergoes sequential degradation by various proteases; leaving a small fragment termed CLIP on each MHC class II molecule. MHC class II molecule interacts with HLA_DM, and HLA_DO in B-cells, in order to release CLIP and facilitate the binding of antigenic peptides. In terms of processing, ubiquitinated by MARCH1 and MARCH8 at Lys-254 leading to down-regulation of MHC class II.

Its subcellular location is the cell membrane. The protein resides in the endoplasmic reticulum membrane. The protein localises to the golgi apparatus. It localises to the trans-Golgi network membrane. It is found in the endosome membrane. Its subcellular location is the lysosome membrane. The protein resides in the late endosome membrane. Its function is as follows. Binds peptides derived from antigens that access the endocytic route of antigen presenting cells (APC) and presents them on the cell surface for recognition by the CD4 T-cells. The peptide binding cleft accommodates peptides of 10-30 residues. The peptides presented by MHC class II molecules are generated mostly by degradation of proteins that access the endocytic route, where they are processed by lysosomal proteases and other hydrolases. Exogenous antigens that have been endocytosed by the APC are thus readily available for presentation via MHC II molecules, and for this reason this antigen presentation pathway is usually referred to as exogenous. As membrane proteins on their way to degradation in lysosomes as part of their normal turn-over are also contained in the endosomal/lysosomal compartments, exogenous antigens must compete with those derived from endogenous components. Autophagy is also a source of endogenous peptides, autophagosomes constitutively fuse with MHC class II loading compartments. In addition to APCs, other cells of the gastrointestinal tract, such as epithelial cells, express MHC class II molecules and CD74 and act as APCs, which is an unusual trait of the GI tract. To produce a MHC class II molecule that presents an antigen, three MHC class II molecules (heterodimers of an alpha and a beta chain) associate with a CD74 trimer in the ER to form a heterononamer. Soon after the entry of this complex into the endosomal/lysosomal system where antigen processing occurs, CD74 undergoes a sequential degradation by various proteases, including CTSS and CTSL, leaving a small fragment termed CLIP (class-II-associated invariant chain peptide). The removal of CLIP is facilitated by HLA-DM via direct binding to the alpha-beta-CLIP complex so that CLIP is released. HLA-DM stabilizes MHC class II molecules until primary high affinity antigenic peptides are bound. The MHC II molecule bound to a peptide is then transported to the cell membrane surface. In B-cells, the interaction between HLA-DM and MHC class II molecules is regulated by HLA-DO. Primary dendritic cells (DCs) also to express HLA-DO. Lysosomal microenvironment has been implicated in the regulation of antigen loading into MHC II molecules, increased acidification produces increased proteolysis and efficient peptide loading. In Homo sapiens (Human), this protein is HLA class II histocompatibility antigen, DR beta 5 chain.